A 52-amino-acid polypeptide reads, in one-letter code: Large ribosomal subunit protein eL39 (52 aa).

Belongs to the eukaryotic ribosomal protein eL39 family. Interacts with YIH1.

The protein is Large ribosomal subunit protein eL39 (RPL39) of Encephalitozoon cuniculi (strain GB-M1) (Microsporidian parasite).